The following is a 273-amino-acid chain: Dermonecrotic toxin LapSicTox-alphaIB1b2 (273 aa).

His5 is a catalytic residue. Mg(2+) contacts are provided by Glu25 and Asp27. His41 functions as the Nucleophile in the catalytic mechanism. Disulfide bonds link Cys45/Cys51 and Cys47/Cys190. Residue Asp85 coordinates Mg(2+). A glycan (N-linked (GlcNAc...) asparagine) is linked at Asn250.

This sequence belongs to the arthropod phospholipase D family. Class II subfamily. Mg(2+) is required as a cofactor. As to expression, expressed by the venom gland.

Its subcellular location is the secreted. It catalyses the reaction an N-(acyl)-sphingosylphosphocholine = an N-(acyl)-sphingosyl-1,3-cyclic phosphate + choline. The enzyme catalyses an N-(acyl)-sphingosylphosphoethanolamine = an N-(acyl)-sphingosyl-1,3-cyclic phosphate + ethanolamine. It carries out the reaction a 1-acyl-sn-glycero-3-phosphocholine = a 1-acyl-sn-glycero-2,3-cyclic phosphate + choline. The catalysed reaction is a 1-acyl-sn-glycero-3-phosphoethanolamine = a 1-acyl-sn-glycero-2,3-cyclic phosphate + ethanolamine. Dermonecrotic toxins cleave the phosphodiester linkage between the phosphate and headgroup of certain phospholipids (sphingolipid and lysolipid substrates), forming an alcohol (often choline) and a cyclic phosphate. This toxin acts on sphingomyelin (SM). It may also act on ceramide phosphoethanolamine (CPE), lysophosphatidylcholine (LPC) and lysophosphatidylethanolamine (LPE), but not on lysophosphatidylserine (LPS), and lysophosphatidylglycerol (LPG). It acts by transphosphatidylation, releasing exclusively cyclic phosphate products as second products. Induces dermonecrosis, hemolysis, increased vascular permeability, edema, inflammatory response, and platelet aggregation. In Loxosceles apachea (Apache recluse spider), this protein is Dermonecrotic toxin LapSicTox-alphaIB1b2.